The primary structure comprises 934 residues: Sorting nexin-14 (934 aa).

The next 2 helical transmembrane spans lie at 27 to 47 and 48 to 68; these read YPVI…LNQY and LHIL…YCSL. The region spanning 129-303 is the PXA domain; it reads PSKVDASISE…MVLIFIDDSP (175 aa). In terms of domain architecture, RGS spans 335–467; the sequence is DLKEIREQQD…CHSDEYFRHL (133 aa). Residues 557–677 enclose the PX domain; it reads WTISIPYVDF…DFLSPFSMES (121 aa).

It belongs to the sorting nexin family.

The protein localises to the lysosome membrane. It localises to the late endosome membrane. The protein resides in the cell projection. Its subcellular location is the dendrite. Its function is as follows. Plays a role in maintaining normal neuronal excitability and synaptic transmission. May be involved in several stages of intracellular trafficking. Required for autophagosome clearance, possibly by mediating the fusion of lysosomes with autophagosomes. Binds phosphatidylinositol 3,5-bisphosphate (PtdIns(3,5)P2), a key component of late endosomes/lysosomes. Does not bind phosphatidylinositol 3-phosphate (PtdIns(3P)). The sequence is that of Sorting nexin-14 from Danio rerio (Zebrafish).